The following is a 465-amino-acid chain: Antithrombin-III (465 aa).

The N-terminal stretch at 1 to 32 (MYSPGAGSGAAGERKLCLLSLLLIGALGCAIC) is a signal peptide. 2 disulfides stabilise this stretch: cysteine 41–cysteine 161 and cysteine 54–cysteine 128. Threonine 64 is subject to Phosphothreonine. Serine 69 bears the Phosphoserine mark. A heparin-binding site is contributed by tryptophan 82. An N-linked (GlcNAc...) asparagine glycan is attached at asparagine 129. Heparin is bound at residue arginine 162. A glycan (N-linked (GlcNAc...) asparagine) is linked at asparagine 168. Arginine 178 contributes to the heparin binding site. 2 N-linked (GlcNAc...) asparagine glycosylation sites follow: asparagine 188 and asparagine 225. A disulfide bridge links cysteine 280 with cysteine 463.

This sequence belongs to the serpin family. Forms protease inhibiting heterodimer with TMPRSS7. In terms of processing, phosphorylated by FAM20C in the extracellular medium. As to expression, plasma.

The protein resides in the secreted. The protein localises to the extracellular space. Functionally, most important serine protease inhibitor in plasma that regulates the blood coagulation cascade. AT-III inhibits thrombin, matriptase-3/TMPRSS7, as well as factors IXa, Xa and XIa. Its inhibitory activity is greatly enhanced in the presence of heparin. This chain is Antithrombin-III (Serpinc1), found in Mus musculus (Mouse).